The primary structure comprises 35 residues: Alpha-amanitin proprotein 1 (35 aa).

Positions 1–10 (MSDINATRLP) are excised as a propeptide. I11 is subject to (3R,4R)-4,5-dihydroxyisoleucine; in form alpha-amanitin. I11 bears the (3R,4S)-4-hydroxyisoleucine; in form gamma-amanitin mark. Positions 11–18 (IWGIGCNP) form a cross-link, cyclopeptide (Ile-Pro). Residues 12–16 (WGIGC) constitute a cross-link (2'-cysteinyl-6'-hydroxytryptophan sulfoxide (Trp-Cys)). Residue P18 is modified to 4-hydroxyproline. Residues 19–35 (CVGDDVTSVLTRGEALC) constitute a propeptide that is removed on maturation.

It belongs to the MSDIN fungal toxin family. Post-translationally, processed by the macrocyclase-peptidase enzyme POPB to yield a toxic cyclic octapeptide. POPB first removes 10 residues from the N-terminus. Conformational trapping of the remaining peptide forces the enzyme to release this intermediate rather than proceed to macrocyclization. The enzyme rebinds the remaining peptide in a different conformation and catalyzes macrocyclization of the N-terminal 8 residues. In terms of tissue distribution, expressed in basidiocarps.

Functionally, major toxin belonging to the bicyclic octapeptides amatoxins that acts by binding non-competitively to RNA polymerase II and greatly slowing the elongation of transcripts from target promoters. In Amanita exitialis (Guangzhou destroying angel), this protein is Alpha-amanitin proprotein 1.